Here is a 142-residue protein sequence, read N- to C-terminus: Large ribosomal subunit protein uL11 (142 aa).

The protein belongs to the universal ribosomal protein uL11 family. As to quaternary structure, part of the ribosomal stalk of the 50S ribosomal subunit. Interacts with L10 and the large rRNA to form the base of the stalk. L10 forms an elongated spine to which L12 dimers bind in a sequential fashion forming a multimeric L10(L12)X complex. Post-translationally, one or more lysine residues are methylated.

Forms part of the ribosomal stalk which helps the ribosome interact with GTP-bound translation factors. The sequence is that of Large ribosomal subunit protein uL11 from Xanthomonas axonopodis pv. citri (strain 306).